The chain runs to 603 residues: Methylenetetrahydrofolate reductase 1 (603 aa).

Glu-21 serves as the catalytic Proton donor/acceptor. Residues 21–26 (EFFPPK) and 53–54 (TW) each bind NAD(+). Residues 53-54 (TW), His-82, 112-114 (RGD), 130-131 (YA), Tyr-153, and Lys-173 contribute to the FAD site. Position 114 (Asp-114) interacts with substrate. The substrate site is built by Gln-184 and Tyr-276. A Phosphoserine modification is found at Ser-355.

The protein belongs to the methylenetetrahydrofolate reductase family. It depends on FAD as a cofactor.

The enzyme catalyses (6S)-5-methyl-5,6,7,8-tetrahydrofolate + NADP(+) = (6R)-5,10-methylene-5,6,7,8-tetrahydrofolate + NADPH + H(+). The catalysed reaction is (6S)-5-methyl-5,6,7,8-tetrahydrofolate + NAD(+) = (6R)-5,10-methylene-5,6,7,8-tetrahydrofolate + NADH + H(+). It functions in the pathway one-carbon metabolism; tetrahydrofolate interconversion. Functionally, major methylenetetrahydrofolate reductase required to generate the methyl groups necessary for methionine synthetase to convert homocysteine to methionine. Performs 80 to 85 percent of the total methylenetetrahydrofolate reductase activity of the cells. The protein is Methylenetetrahydrofolate reductase 1 (met9) of Schizosaccharomyces pombe (strain 972 / ATCC 24843) (Fission yeast).